Reading from the N-terminus, the 165-residue chain is Methylated-DNA--protein-cysteine methyltransferase, constitutive (165 aa).

The Nucleophile; methyl group acceptor role is filled by Cys-130.

It belongs to the MGMT family.

It localises to the cytoplasm. It catalyses the reaction a 6-O-methyl-2'-deoxyguanosine in DNA + L-cysteinyl-[protein] = S-methyl-L-cysteinyl-[protein] + a 2'-deoxyguanosine in DNA. The enzyme catalyses a 4-O-methyl-thymidine in DNA + L-cysteinyl-[protein] = a thymidine in DNA + S-methyl-L-cysteinyl-[protein]. Functionally, involved in the cellular defense against the biological effects of O6-methylguanine (O6-MeG) and O4-methylthymine (O4-MeT) in DNA. Repairs the methylated nucleobase in DNA by stoichiometrically transferring the methyl group to a cysteine residue in the enzyme. This is a suicide reaction: the enzyme is irreversibly inactivated. This chain is Methylated-DNA--protein-cysteine methyltransferase, constitutive, found in Bacillus subtilis (strain 168).